A 98-amino-acid chain; its full sequence is MPRSLKKGPFIEGKLEKRILDMNSREEKKVVKTWARSSMISPDFVGHTVAVHNGKTHVPVYISENMVGHKLGEFAPTRTYRGHAGGKAEKGGSAPKRK.

The segment at 77 to 98 (TRTYRGHAGGKAEKGGSAPKRK) is disordered.

The protein belongs to the universal ribosomal protein uS19 family.

In terms of biological role, protein S19 forms a complex with S13 that binds strongly to the 16S ribosomal RNA. The sequence is that of Small ribosomal subunit protein uS19 from Prosthecochloris aestuarii (strain DSM 271 / SK 413).